We begin with the raw amino-acid sequence, 619 residues long: Cationic amino acid transporter 3 (619 aa).

Residues 1 to 36 (MLWQALRRFGQKLVRRRLLELGMGETRLARCLSTLD) lie on the Cytoplasmic side of the membrane. Residues 37-57 (LVALGVGSTLGAGVYVLAGEV) traverse the membrane as a helical segment. At 58-61 (AKEK) the chain is on the extracellular side. The helical transmembrane segment at 62–82 (AGPSIVICFLVAALSSVLAGL) threads the bilayer. The Cytoplasmic portion of the chain corresponds to 83-107 (CYAEFGARVPGSGSAYLYSYVTVGE). Residues 108 to 128 (LWAFTTGWNLILSYVIGTASV) form a helical membrane-spanning segment. Residues 129 to 162 (ARAWSSAFDNLIGNHISQTLKGTILLNMPHVLAE) are Extracellular-facing. Residues 163–183 (YPDFFALALVLLLTGLLVLGA) form a helical membrane-spanning segment. Over 184-191 (NESGLVTK) the chain is Cytoplasmic. Residues 192–212 (VFTGMNLLVLGFVIISGFIKG) traverse the membrane as a helical segment. The Extracellular segment spans residues 213–244 (ELRNWKLTKEDYCLTMSESNGTCSLDSMGSGG). The N-linked (GlcNAc...) asparagine glycan is linked to Asn232. A helical membrane pass occupies residues 245 to 265 (FMPFGLEGILRGAATCFYAFV). Residues 266–285 (GFDCIATTGEEAQNPQRSIP) lie on the Cytoplasmic side of the membrane. The chain crosses the membrane as a helical span at residues 286–306 (MGIVISLSICFLAYFGVSSAL). Residues 307–335 (TLMMPYYKLQPESPLPEAFTYVGWEPARY) are Extracellular-facing. Residues 336–356 (LVAIGSLCALSTSLLGSMFPM) traverse the membrane as a helical segment. Residues 357-382 (PRVIYAMAEDGLLFRVLARVHNGTHT) are Cytoplasmic-facing. The chain crosses the membrane as a helical span at residues 383–403 (PIVATVVSGVIAAFMAFLFEL). Residues 404-406 (TDL) are Extracellular-facing. A helical membrane pass occupies residues 407 to 427 (VDLMSIGTLLAYSLVSICVLI). The Cytoplasmic portion of the chain corresponds to 428 to 475 (LRYQPDQEMKNGEEEVELQEERTLEAEKLTVQALFCQVDSIPTLLSGR). A helical transmembrane segment spans residues 476–496 (IVYVCSSLLAVLLTVLCLVLT). Residues 497–507 (WWTTPLHSGDP) lie on the Extracellular side of the membrane. The chain crosses the membrane as a helical span at residues 508-528 (VWVTVVVLILGLILGISGVIW). At 529–540 (RQPQNRTPLHFK) the chain is on the cytoplasmic side. A helical transmembrane segment spans residues 541 to 561 (VPVVPLLPLVSIFVNVYLMMQ). The Extracellular portion of the chain corresponds to 562-569 (MTADTWAR). Residues 570–590 (FGVWMLIGFAIYFGYGIQHSV) form a helical membrane-spanning segment. At 591–619 (EEVKNHQTLPKTRPQTIDLDLTTSCVHSI) the chain is on the cytoplasmic side. Thr606 carries the post-translational modification Phosphothreonine. Residue Ser618 is modified to Phosphoserine.

The protein belongs to the amino acid-polyamine-organocation (APC) superfamily. Cationic amino acid transporter (CAT) (TC 2.A.3.3) family. In terms of processing, N-glycosylated. Highly expressed in brain.

The protein localises to the cell membrane. The enzyme catalyses L-arginine(in) = L-arginine(out). The catalysed reaction is L-lysine(in) = L-lysine(out). It carries out the reaction L-ornithine(in) = L-ornithine(out). With respect to regulation, inhibited by high potassium ions-induced membrane depolarization. Uniporter that mediates the uptake of cationic L-amino acids such as L-arginine, L-lysine and L-ornithine. The transport is sodium ions- and pH-independent, moderately trans-stimulated and is mediated by passive diffusion. The polypeptide is Cationic amino acid transporter 3 (Rattus norvegicus (Rat)).